The chain runs to 372 residues: 4-hydroxy-3-methylbut-2-en-1-yl diphosphate synthase (flavodoxin) (372 aa).

Residues Cys-270, Cys-273, Cys-305, and Glu-312 each contribute to the [4Fe-4S] cluster site.

It belongs to the IspG family. [4Fe-4S] cluster serves as cofactor.

It carries out the reaction (2E)-4-hydroxy-3-methylbut-2-enyl diphosphate + oxidized [flavodoxin] + H2O + 2 H(+) = 2-C-methyl-D-erythritol 2,4-cyclic diphosphate + reduced [flavodoxin]. The protein operates within isoprenoid biosynthesis; isopentenyl diphosphate biosynthesis via DXP pathway; isopentenyl diphosphate from 1-deoxy-D-xylulose 5-phosphate: step 5/6. Converts 2C-methyl-D-erythritol 2,4-cyclodiphosphate (ME-2,4cPP) into 1-hydroxy-2-methyl-2-(E)-butenyl 4-diphosphate. This Salmonella schwarzengrund (strain CVM19633) protein is 4-hydroxy-3-methylbut-2-en-1-yl diphosphate synthase (flavodoxin).